The following is a 1044-amino-acid chain: Spindle assembly checkpoint serine/threonine-protein kinase bub1 (1044 aa).

One can recognise a BUB1 N-terminal domain in the interval 36 to 204; sequence FQEELDIIEE…SSPFPPPRIV (169 aa). 5 disordered regions span residues 209-259, 317-343, 404-446, 484-555, and 685-705; these read PVSS…PLLY, VHHD…TPTR, ESLE…SQEE, KNSN…DSNS, and IKPK…SLDG. The span at 223 to 239 shows a compositional bias: polar residues; it reads QVFSDASSSRDSQNASD. Residues 430–442 are compositionally biased toward polar residues; it reads NSSNSGATSLTGR. Residues 504 to 518 show a composition bias toward low complexity; that stretch reads STLQEETATGTTSTT. The span at 544–555 shows a compositional bias: polar residues; sequence RSPQYSTVDSNS. Thr550 is subject to Phosphothreonine. The 327-residue stretch at 718–1044 folds into the Protein kinase domain; sequence LSVISKLGQG…LLKSIEKRKI (327 aa). The ATP site is built by Ala728, Phe729, Ala730, Lys762, and Asp809. Catalysis depends on Asp861, which acts as the Proton acceptor. Residues Asp865, Asn866, and Asp900 each coordinate ATP.

Belongs to the protein kinase superfamily. Ser/Thr protein kinase family. BUB1 subfamily. As to quaternary structure, part of the BUB1-BUB3 complex, composed of bub1 and bub3. Interacts with spc7 (when phosphorylated on MELT motifs); to recruit the bub1-bub3 complex to kinetochores. Interacts with mad3. In terms of processing, autophosphorylated.

It is found in the nucleus. Its subcellular location is the chromosome. It localises to the centromere. The protein localises to the kinetochore. The catalysed reaction is L-seryl-[protein] + ATP = O-phospho-L-seryl-[protein] + ADP + H(+). The enzyme catalyses L-threonyl-[protein] + ATP = O-phospho-L-threonyl-[protein] + ADP + H(+). In terms of biological role, involved in mitotic spindle assembly checkpoint signaling, a process that delays anaphase until chromosomes are bioriented on the spindle, and in the repair of incorrect mitotic kinetochore-spindle microtubule attachments. Acts as a kinetochore scaffold for the recruitment of other spindle assembly checkpoint components. This chain is Spindle assembly checkpoint serine/threonine-protein kinase bub1, found in Schizosaccharomyces pombe (strain 972 / ATCC 24843) (Fission yeast).